A 376-amino-acid chain; its full sequence is Putative aryl-alcohol dehydrogenase AAD14 (376 aa).

Tyr-76 functions as the Proton donor in the catalytic mechanism. Residue His-151 coordinates substrate. An NADP(+)-binding site is contributed by 236-246; sequence DVMGGGRFQSK.

It belongs to the aldo/keto reductase family. Aldo/keto reductase 2 subfamily.

The chain is Putative aryl-alcohol dehydrogenase AAD14 (AAD14) from Saccharomyces cerevisiae (strain ATCC 204508 / S288c) (Baker's yeast).